We begin with the raw amino-acid sequence, 267 residues long: Tryptophan synthase alpha chain (267 aa).

Active-site proton acceptor residues include E51 and D62.

Belongs to the TrpA family. As to quaternary structure, tetramer of two alpha and two beta chains.

It carries out the reaction (1S,2R)-1-C-(indol-3-yl)glycerol 3-phosphate + L-serine = D-glyceraldehyde 3-phosphate + L-tryptophan + H2O. It functions in the pathway amino-acid biosynthesis; L-tryptophan biosynthesis; L-tryptophan from chorismate: step 5/5. Its function is as follows. The alpha subunit is responsible for the aldol cleavage of indoleglycerol phosphate to indole and glyceraldehyde 3-phosphate. In Prochlorococcus marinus (strain SARG / CCMP1375 / SS120), this protein is Tryptophan synthase alpha chain.